The chain runs to 289 residues: Cbb3-type cytochrome c oxidase subunit FixP (289 aa).

At 1-33 (MADKHKHVDEVSGVETTGHEWDGIRELNNPLPR) the chain is on the cytoplasmic side. The helical transmembrane segment at 34–56 (WWVYSFYATIIWAIGYAVAYPSW) threads the bilayer. The Periplasmic portion of the chain corresponds to 57–289 (PMLTEATKGV…VFVHSLGGGE (233 aa)). Cytochrome c domains are found at residues 110–198 (FAVS…MSLT) and 205–286 (HLVE…HSLG). Residues Cys-123, Cys-126, His-127, Met-175, Cys-218, Cys-221, His-222, and Met-263 each contribute to the heme c site.

This sequence belongs to the CcoP / FixP family. Component of the cbb3-type cytochrome c oxidase at least composed of FixN, FixO, FixQ and FixP. Heme c is required as a cofactor.

It localises to the cell inner membrane. It participates in energy metabolism; oxidative phosphorylation. In terms of biological role, C-type cytochrome. Part of the cbb3-type cytochrome c oxidase complex. FixP subunit is required for transferring electrons from donor cytochrome c via its heme groups to FixO subunit. From there, electrons are shuttled to the catalytic binuclear center of FixN subunit where oxygen reduction takes place. The complex also functions as a proton pump. The sequence is that of Cbb3-type cytochrome c oxidase subunit FixP from Sinorhizobium medicae (strain WSM419) (Ensifer medicae).